Reading from the N-terminus, the 669-residue chain is DNA ligase (669 aa).

Residues 33–37 (DVTYD), 82–83 (SL), and E115 contribute to the NAD(+) site. K117 (N6-AMP-lysine intermediate) is an active-site residue. NAD(+)-binding residues include R138, E172, K286, and K310. 4 residues coordinate Zn(2+): C401, C404, C417, and C422. The BRCT domain maps to 589–669 (IDSSFLFGKK…DIKNLVNLDD (81 aa)).

This sequence belongs to the NAD-dependent DNA ligase family. LigA subfamily. Mg(2+) serves as cofactor. The cofactor is Mn(2+).

The catalysed reaction is NAD(+) + (deoxyribonucleotide)n-3'-hydroxyl + 5'-phospho-(deoxyribonucleotide)m = (deoxyribonucleotide)n+m + AMP + beta-nicotinamide D-nucleotide.. DNA ligase that catalyzes the formation of phosphodiester linkages between 5'-phosphoryl and 3'-hydroxyl groups in double-stranded DNA using NAD as a coenzyme and as the energy source for the reaction. It is essential for DNA replication and repair of damaged DNA. The protein is DNA ligase of Borrelia recurrentis (strain A1).